The following is an 843-amino-acid chain: Tetratricopeptide repeat protein 7B (843 aa).

A TPR 1 repeat occupies 97 to 131 (QESNLIMAKLNYVEGDYKEALNIYARVGLDDLPLT). Phosphoserine is present on residues serine 160 and serine 202. TPR repeat units follow at residues 219–252 (ETGLQRAHVLYFKNGNLTRGVGRFRELLRAVETR), 363–396 (SVVYDLLTIALGRRGQYEMLSECLERAMKFAFEE), 397–430 (FHLWYQFALSLMAAGKSARAVKVLKECIRLKPDD), 479–514 (TYSLQATDASLRGMQEVLQRKALLAFQRAHSLSPTD), 516–548 (QAAFYLALQLAISRQIPEALGYVRQALQLQGDD), and 549–582 (ANSLHLLALLLSAQKHYHDALNIIDMALSEYPEN). A phosphoserine mark is found at serine 625, serine 629, serine 630, serine 673, serine 677, serine 678, and serine 681. TPR repeat units lie at residues 696-729 (AQIWLHAAEVYIGIGKPAEATACTQEAANLFPMS), 730-763 (HNVLYMRGQIAELRGSMDEARRWYEEALAISPTH), 765-797 (KSMQRLALILHQLGRYSLAEKILRDAVQVNSTA), and 798-831 (HEVWNGLGEVLQAQGNDAAATECFLTALELEASS).

Component of a phosphatidylinositol 4-kinase (PI4K) complex, composed of PI4KA, EFR3 (EFR3A or EFR3B), TTC7 (TTC7A or TTC7B) and HYCC (HYCC1 or HYCC2). Interacts with PI4KA, interaction is direct. Interacts with EFR3 (EFR3A or EFR3B), interaction is direct. Interacts with HYCC (HYCC1 or HYCC2), interaction is direct. Association with the PI4K complex is strongly reduced by TMEM150A.

Its subcellular location is the cytoplasm. The protein resides in the cytosol. It is found in the cell membrane. In terms of biological role, component of a complex required to localize phosphatidylinositol 4-kinase (PI4K) to the plasma membrane. The complex acts as a regulator of phosphatidylinositol 4-phosphate (PtdIns(4)P) synthesis. In the complex, plays a central role in bridging PI4KA to EFR3B and HYCC1, via direct interactions. This chain is Tetratricopeptide repeat protein 7B (TTC7B), found in Homo sapiens (Human).